A 389-amino-acid chain; its full sequence is Chalcone synthase 1 (389 aa).

Cys-164 is an active-site residue.

The protein belongs to the thiolase-like superfamily. Chalcone/stilbene synthases family.

It carries out the reaction (E)-4-coumaroyl-CoA + 3 malonyl-CoA + 3 H(+) = 2',4,4',6'-tetrahydroxychalcone + 3 CO2 + 4 CoA. The protein operates within secondary metabolite biosynthesis; flavonoid biosynthesis. Functionally, the primary product of this enzyme is 4,2',4',6'-tetrahydroxychalcone (also termed naringenin-chalcone or chalcone) which can under specific conditions spontaneously isomerize into naringenin. The protein is Chalcone synthase 1 (CHS1) of Daucus carota (Wild carrot).